Reading from the N-terminus, the 343-residue chain is MDDNKAKALAAALQQIEKQFGKGSIMKMGDAEIDEGIQVVSTGSLGLDIALGVGGLPRGRVVEIYGPESSGKTTLCLQVVAEMQKLGGVAAFIDAEHALDPQYAQKLGVNVGDLLISQPDTGEQALEIADMLVRSGSVDIIVVDSVAALTPRAEIEGEMGDQMVGLHARLMSQALRKLTANIKKTNTLVIFINQIRMKIGVMFGSPETTTGGNALKFYASVRLDIRRIGAIKKGDEVIGSETKVKVVKNKVAPPFREAIFDILYGEGISRQGEIVEMGVAHKLVDKSGAWYAYKGEKIGQGKDNAREFLKANPEIAQEIEAGIREAASTNVIKPVKAAKAADA.

G66–T73 contributes to the ATP binding site.

It belongs to the RecA family.

It localises to the cytoplasm. Its function is as follows. Can catalyze the hydrolysis of ATP in the presence of single-stranded DNA, the ATP-dependent uptake of single-stranded DNA by duplex DNA, and the ATP-dependent hybridization of homologous single-stranded DNAs. It interacts with LexA causing its activation and leading to its autocatalytic cleavage. The chain is Protein RecA from Dechloromonas aromatica (strain RCB).